The primary structure comprises 149 residues: MAANSEPFWKRKTLAQLDRDEWESLCDGCGLCCLQKLEDEDDGAVYYTRIACKLLDLQTCRCSDYANRIKHVPDCIQLTPAQADQFQWLPPTCAYRLVSEGRDLPHWHHLVSGDPDAVHAERISQSGRMLSENSVAEEDWEEHLIFRAG.

It belongs to the UPF0260 family.

This Ectopseudomonas mendocina (strain ymp) (Pseudomonas mendocina) protein is UPF0260 protein Pmen_1776.